A 221-amino-acid polypeptide reads, in one-letter code: 7-cyano-7-deazaguanine synthase (221 aa).

An ATP-binding site is contributed by 10 to 20 (FSGGQDSTTCL). Residues Cys186, Cys195, Cys198, and Cys201 each contribute to the Zn(2+) site.

The protein belongs to the QueC family. In terms of assembly, homodimer. It depends on Zn(2+) as a cofactor.

The enzyme catalyses 7-carboxy-7-deazaguanine + NH4(+) + ATP = 7-cyano-7-deazaguanine + ADP + phosphate + H2O + H(+). It functions in the pathway purine metabolism; 7-cyano-7-deazaguanine biosynthesis. Functionally, catalyzes the ATP-dependent conversion of 7-carboxy-7-deazaguanine (CDG) to 7-cyano-7-deazaguanine (preQ(0)). This Geobacillus thermodenitrificans (strain NG80-2) protein is 7-cyano-7-deazaguanine synthase.